Consider the following 316-residue polypeptide: Ribosomal RNA small subunit methyltransferase H (316 aa).

S-adenosyl-L-methionine-binding positions include 35-37 (AGH), aspartate 55, phenylalanine 84, aspartate 105, and glutamine 112.

This sequence belongs to the methyltransferase superfamily. RsmH family.

Its subcellular location is the cytoplasm. The catalysed reaction is cytidine(1402) in 16S rRNA + S-adenosyl-L-methionine = N(4)-methylcytidine(1402) in 16S rRNA + S-adenosyl-L-homocysteine + H(+). Specifically methylates the N4 position of cytidine in position 1402 (C1402) of 16S rRNA. This chain is Ribosomal RNA small subunit methyltransferase H, found in Streptococcus thermophilus (strain ATCC BAA-250 / LMG 18311).